Consider the following 525-residue polypeptide: Ribosomal protein S6 kinase beta-1 (525 aa).

Positions 28 to 32 (FDIDL) match the TOS motif motif. Positions 28 to 54 (FDIDLDQPEDAGSEDELEEGGQLNESM) are disordered. Residues 30–46 (IDLDQPEDAGSEDELEE) show a composition bias toward acidic residues. A Protein kinase domain is found at 91 to 352 (FELLRVLGKG…AGEVQAHPFF (262 aa)). Residues 97 to 105 (LGKGGYGKV) and Lys123 contribute to the ATP site. Asp218 acts as the Proton acceptor in catalysis. A Phosphothreonine; by PDPK1 modification is found at Thr252. Residues 353-423 (RHINWEELLA…VAPSVLESVK (71 aa)) enclose the AGC-kinase C-terminal domain. Residues 380–399 (SQFDSKFTRQTPVDSPDDST) are disordered. The segment covering 381-399 (QFDSKFTRQTPVDSPDDST) has biased composition (polar residues). At Ser394 the chain carries Phosphoserine. A Phosphothreonine; by MTOR, NEK6 and NEK7 modification is found at Thr412. The autoinhibitory domain stretch occupies residues 424–525 (EKFSFEPKIR…KRPEHLRMNL (102 aa)). 2 positions are modified to phosphoserine: Ser434 and Ser441. Thr444 is modified (phosphothreonine). Phosphoserine is present on residues Ser447 and Ser452. The segment at 486-509 (VTTSGEASAPLPIRQPNSGPYKKQ) is disordered. Lys516 is subject to N6-acetyllysine.

The protein belongs to the protein kinase superfamily. AGC Ser/Thr protein kinase family. S6 kinase subfamily. Interacts with PPP1R9A/neurabin-1. Interacts with RPTOR. Interacts with IRS1. Interacts with EIF3B and EIF3C. Interacts with POLDIP3. Interacts with TRAF4. Interacts (via N-terminus) with IER5. In terms of processing, dephosphorylation by PPP1CC at Thr-412 in mitochondrion. Phosphorylation at Thr-412 is regulated by mTORC1. The phosphorylation at this site is maintained by an agonist-dependent autophosphorylation mechanism. Activated by phosphorylation at Thr-252 by PDPK1. In terms of tissue distribution, brain.

The protein resides in the cytoplasm. It is found in the synapse. The protein localises to the synaptosome. Its subcellular location is the mitochondrion outer membrane. It localises to the mitochondrion. The catalysed reaction is L-seryl-[protein] + ATP = O-phospho-L-seryl-[protein] + ADP + H(+). It carries out the reaction L-threonyl-[protein] + ATP = O-phospho-L-threonyl-[protein] + ADP + H(+). Its activity is regulated as follows. Activation requires multiple phosphorylation events on serine/threonine residues. Activation appears to be first mediated by phosphorylation of multiple sites in the autoinhibitory domain, which facilitates phosphorylation at Thr-412, disrupting the autoinhibitory mechanism and allowing phosphorylation of Thr-252 by PDPK1. The active conformation of the kinase is believed to be stabilized by a mechanism involving three conserved phosphorylation sites located in the kinase domain activation loop (Thr-252) and in the AGC-kinase C-terminal domain (Ser-394 in the middle of the tail/linker region and Thr-412 within a hydrophobic motif at its end). Activated by mTORC1; isoform Alpha I and isoform Alpha II are sensitive to rapamycin, which inhibits activating phosphorylation at Thr-412. Activated by PDPK1. In terms of biological role, serine/threonine-protein kinase that acts downstream of mTOR signaling in response to growth factors and nutrients to promote cell proliferation, cell growth and cell cycle progression. Regulates protein synthesis through phosphorylation of EIF4B, RPS6 and EEF2K, and contributes to cell survival by repressing the pro-apoptotic function of BAD. Under conditions of nutrient depletion, the inactive form associates with the EIF3 translation initiation complex. Upon mitogenic stimulation, phosphorylation by the mechanistic target of rapamycin complex 1 (mTORC1) leads to dissociation from the EIF3 complex and activation. The active form then phosphorylates and activates several substrates in the pre-initiation complex, including the EIF2B complex and the cap-binding complex component EIF4B. Also controls translation initiation by phosphorylating a negative regulator of EIF4A, PDCD4, targeting it for ubiquitination and subsequent proteolysis. Promotes initiation of the pioneer round of protein synthesis by phosphorylating POLDIP3/SKAR. In response to IGF1, activates translation elongation by phosphorylating EEF2 kinase (EEF2K), which leads to its inhibition and thus activation of EEF2. Also plays a role in feedback regulation of mTORC2 by mTORC1 by phosphorylating MAPKAP1/SIN1, MTOR and RICTOR, resulting in the inhibition of mTORC2 and AKT1 signaling. Also involved in feedback regulation of mTORC1 and mTORC2 by phosphorylating DEPTOR. Mediates cell survival by phosphorylating the pro-apoptotic protein BAD and suppressing its pro-apoptotic function. Phosphorylates mitochondrial URI1 leading to dissociation of a URI1-PPP1CC complex. The free mitochondrial PPP1CC can then dephosphorylate RPS6KB1 at Thr-412, which is proposed to be a negative feedback mechanism for the RPS6KB1 anti-apoptotic function. Mediates TNF-alpha-induced insulin resistance by phosphorylating IRS1 at multiple serine residues, resulting in accelerated degradation of IRS1. In cells lacking functional TSC1-2 complex, constitutively phosphorylates and inhibits GSK3B. May be involved in cytoskeletal rearrangement through binding to neurabin. Phosphorylates and activates the pyrimidine biosynthesis enzyme CAD, downstream of MTOR. Following activation by mTORC1, phosphorylates EPRS and thereby plays a key role in fatty acid uptake by adipocytes and also most probably in interferon-gamma-induced translation inhibition. This chain is Ribosomal protein S6 kinase beta-1 (Rps6kb1), found in Rattus norvegicus (Rat).